A 508-amino-acid polypeptide reads, in one-letter code: Kinesin light chain (508 aa).

The stretch at 34-129 (IAEVQKDNEK…KKHLEFMASV (96 aa)) forms a coiled coil. The segment at 156–175 (DEENEDRHNMSPTPPSQFAN) is disordered. Position 168 is a phosphothreonine (Thr168). TPR repeat units follow at residues 186 to 219 (LRTL…LERT), 228 to 261 (ATML…RGKT), 270 to 303 (AATL…REKV), 312 to 345 (AKQL…YESK), 354 to 387 (AKTK…AHER), and 437 to 470 (TTTL…KKEA). The residue at position 477 (Thr477) is a Phosphothreonine. Phosphoserine occurs at positions 480 and 485. The disordered stretch occupies residues 484-508 (TSNEKRRSKAIKEDLDFSEEKNAKP). The span at 493-508 (AIKEDLDFSEEKNAKP) shows a compositional bias: basic and acidic residues.

It belongs to the kinesin light chain family. Oligomeric complex composed of two heavy chains and two light chains. In terms of tissue distribution, ubiquitous.

The protein localises to the cytoplasm. The protein resides in the cytoskeleton. Functionally, kinesin is a microtubule-associated force-producing protein that may play a role in organelle transport. The light chain may function in coupling of cargo to the heavy chain or in the modulation of its ATPase activity. This Drosophila melanogaster (Fruit fly) protein is Kinesin light chain (Klc).